The following is a 492-amino-acid chain: Catalase (492 aa).

Catalysis depends on residues His-65 and Asn-138. Tyr-348 contacts heme.

This sequence belongs to the catalase family. In terms of assembly, homotetramer. Heme is required as a cofactor.

The protein localises to the cytoplasm. It is found in the cytosol. Its subcellular location is the peroxisome matrix. It carries out the reaction 2 H2O2 = O2 + 2 H2O. Its function is as follows. Catalyzes the degradation of hydrogen peroxide (H(2)O(2)) generated by peroxisomal oxidases to water and oxygen, thereby protecting cells from the toxic effects of hydrogen peroxide. This Ipomoea batatas (Sweet potato) protein is Catalase.